The primary structure comprises 238 residues: ATP synthase subunit a (238 aa).

Transmembrane regions (helical) follow at residues 15 to 35 (IFNL…FVFI), 76 to 96 (YSLF…LGLM), 111 to 131 (PTAN…LTHI), 167 to 187 (LALR…LLLL), and 208 to 230 (AFSV…VYLG).

This sequence belongs to the ATPase A chain family. In terms of assembly, F-type ATPases have 2 components, CF(1) - the catalytic core - and CF(0) - the membrane proton channel. CF(1) has five subunits: alpha(3), beta(3), gamma(1), delta(1), epsilon(1). CF(0) has three main subunits: a(1), b(2) and c(9-12). The alpha and beta chains form an alternating ring which encloses part of the gamma chain. CF(1) is attached to CF(0) by a central stalk formed by the gamma and epsilon chains, while a peripheral stalk is formed by the delta and b chains.

It localises to the cell membrane. Functionally, key component of the proton channel; it plays a direct role in the translocation of protons across the membrane. The protein is ATP synthase subunit a of Streptococcus pneumoniae (strain 70585).